The following is a 197-amino-acid chain: Crossover junction endodeoxyribonuclease RuvC (197 aa).

Catalysis depends on residues Asp-7, Glu-68, and Asp-141. Mg(2+) contacts are provided by Asp-7, Glu-68, and Asp-141. Low complexity-rich tracts occupy residues 165 to 181 (AAPA…TPAR) and 188 to 197 (APARRPAGAS). The interval 165-197 (AAPAAPVSRPAPATPARRSPRPAAPARRPAGAS) is disordered.

The protein belongs to the RuvC family. In terms of assembly, homodimer which binds Holliday junction (HJ) DNA. The HJ becomes 2-fold symmetrical on binding to RuvC with unstacked arms; it has a different conformation from HJ DNA in complex with RuvA. In the full resolvosome a probable DNA-RuvA(4)-RuvB(12)-RuvC(2) complex forms which resolves the HJ. It depends on Mg(2+) as a cofactor.

The protein resides in the cytoplasm. It catalyses the reaction Endonucleolytic cleavage at a junction such as a reciprocal single-stranded crossover between two homologous DNA duplexes (Holliday junction).. Its function is as follows. The RuvA-RuvB-RuvC complex processes Holliday junction (HJ) DNA during genetic recombination and DNA repair. Endonuclease that resolves HJ intermediates. Cleaves cruciform DNA by making single-stranded nicks across the HJ at symmetrical positions within the homologous arms, yielding a 5'-phosphate and a 3'-hydroxyl group; requires a central core of homology in the junction. The consensus cleavage sequence is 5'-(A/T)TT(C/G)-3'. Cleavage occurs on the 3'-side of the TT dinucleotide at the point of strand exchange. HJ branch migration catalyzed by RuvA-RuvB allows RuvC to scan DNA until it finds its consensus sequence, where it cleaves and resolves the cruciform DNA. This Frankia alni (strain DSM 45986 / CECT 9034 / ACN14a) protein is Crossover junction endodeoxyribonuclease RuvC.